A 429-amino-acid polypeptide reads, in one-letter code: MDRIRIVGGQELNGVIQISGAKNAALPLMIASLLTAETLTLDNLPNLADVNMLLRILGHHGVDHSVDGRRLGAAPNASRPVHLTARDIVDTTAPYELVSKMRASFWVIAPLLARMGEAKVSLPGGCAIGTRPVDLLIMALEKLGASVEIEAGYVHAKAPKGLRGAEIKFPKVTVGGTHTALMAASLAHGHTRIVNAAREPEVVDLAECLVKMGARIKGAGQSVIDVEGVARLNGASHRVLPDRIEAGTYAIAAAMAGGDVMLEGAEAGLLQSALDVLVEAGATVNVVNEGIRVQRNGAGLMPVDIVTAPFPGFPTDLQAQFMALMTKAKGQSRITETIFENRFMHVQELARLGAHIRLDGDVALVDGVERLEGAPVMATDLRASVSLVIAALAAEGETMVNRVYHLDRGFEHLETKLGGCGAIIERLSG.

22–23 (KN) contributes to the phosphoenolpyruvate binding site. A UDP-N-acetyl-alpha-D-glucosamine-binding site is contributed by Arg102. Catalysis depends on Cys126, which acts as the Proton donor. At Cys126 the chain carries 2-(S-cysteinyl)pyruvic acid O-phosphothioketal. UDP-N-acetyl-alpha-D-glucosamine-binding positions include 131 to 135 (RPVDL), Asp316, and Ile338.

It belongs to the EPSP synthase family. MurA subfamily.

The protein resides in the cytoplasm. The catalysed reaction is phosphoenolpyruvate + UDP-N-acetyl-alpha-D-glucosamine = UDP-N-acetyl-3-O-(1-carboxyvinyl)-alpha-D-glucosamine + phosphate. It functions in the pathway cell wall biogenesis; peptidoglycan biosynthesis. Cell wall formation. Adds enolpyruvyl to UDP-N-acetylglucosamine. The chain is UDP-N-acetylglucosamine 1-carboxyvinyltransferase from Methylocella silvestris (strain DSM 15510 / CIP 108128 / LMG 27833 / NCIMB 13906 / BL2).